The primary structure comprises 131 residues: D-ribose pyranase (131 aa).

The Proton donor role is filled by His20. Substrate is bound by residues Asp28, His98, and 120–122 (YAN).

The protein belongs to the RbsD / FucU family. RbsD subfamily. As to quaternary structure, homodecamer.

Its subcellular location is the cytoplasm. It catalyses the reaction beta-D-ribopyranose = beta-D-ribofuranose. Its pathway is carbohydrate metabolism; D-ribose degradation; D-ribose 5-phosphate from beta-D-ribopyranose: step 1/2. Its function is as follows. Catalyzes the interconversion of beta-pyran and beta-furan forms of D-ribose. This Clostridium perfringens (strain ATCC 13124 / DSM 756 / JCM 1290 / NCIMB 6125 / NCTC 8237 / Type A) protein is D-ribose pyranase.